Here is a 486-residue protein sequence, read N- to C-terminus: Ribulose bisphosphate carboxylase large chain (486 aa).

Substrate-binding residues include Asn-126 and Thr-176. Lys-178 (proton acceptor) is an active-site residue. Residue Lys-180 participates in substrate binding. 3 residues coordinate Mg(2+): Lys-204, Asp-206, and Glu-207. Lys-204 carries the N6-carboxylysine modification. Residue His-296 is the Proton acceptor of the active site. Positions 297, 329, and 381 each coordinate substrate.

The protein belongs to the RuBisCO large chain family. Type I subfamily. In terms of assembly, heterohexadecamer of 8 large chains and 8 small chains. It depends on Mg(2+) as a cofactor.

The catalysed reaction is 2 (2R)-3-phosphoglycerate + 2 H(+) = D-ribulose 1,5-bisphosphate + CO2 + H2O. The enzyme catalyses D-ribulose 1,5-bisphosphate + O2 = 2-phosphoglycolate + (2R)-3-phosphoglycerate + 2 H(+). RuBisCO catalyzes two reactions: the carboxylation of D-ribulose 1,5-bisphosphate, the primary event in carbon dioxide fixation, as well as the oxidative fragmentation of the pentose substrate. Both reactions occur simultaneously and in competition at the same active site. This is Ribulose bisphosphate carboxylase large chain from Sinorhizobium medicae (strain WSM419) (Ensifer medicae).